Reading from the N-terminus, the 979-residue chain is Receptor-type tyrosine-protein phosphatase-like N (979 aa).

The first 34 residues, 1–34, serve as a signal peptide directing secretion; the sequence is MRLPGRPGGPGGSGGLRVLLCLLLLGSRPGGCNA. Residues 35 to 131 are RESP18 homology domain; the sequence is ISAHGCLFDR…HPRDRSGLVP (97 aa). The Lumenal portion of the chain corresponds to 35 to 575; that stretch reads ISAHGCLFDR…RPAHSTSPMR (541 aa). A disulfide bond links Cys-53 and Cys-62. A compositionally biased stretch (basic and acidic residues) spans 113-127; the sequence is IPRLRPPEPHPRDRS. 4 disordered regions span residues 113–171, 248–272, 285–332, and 391–466; these read IPRL…GAGS, GSKG…PAQL, SQVP…EQPD, and EQVQ…STRP. A phosphoserine mark is found at Ser-308 and Ser-309. The span at 400 to 409 shows a compositional bias: pro residues; that stretch reads EPPPPMPSLP. The sufficient for dimerization of proICA512 stretch occupies residues 449–575; that stretch reads SPLGQNQPTM…RPAHSTSPMR (127 aa). Residues 451–466 show a composition bias toward polar residues; it reads LGQNQPTMAGQPSTRP. Residues Asn-506 and Asn-524 are each glycosylated (N-linked (GlcNAc...) asparagine). The helical transmembrane segment at 576 to 600 threads the bilayer; that stretch reads SVLLTLVALAGVAGLLVALAVALCV. The interval 601 to 732 is sufficient for dimerization of proICA512; the sequence is RQHARQRDKE…PNTCATAQGE (132 aa). Residues 601–979 lie on the Cytoplasmic side of the membrane; that stretch reads RQHARQRDKE…VNAILKALPQ (379 aa). The interval 643–680 is disordered; it reads NRAEGPPEPSRVSSVSSQFSDAAQASPSSHSSTPSWCE. The segment covering 652 to 677 has biased composition (low complexity); the sequence is SRVSSVSSQFSDAAQASPSSHSSTPS. Residues 709–969 enclose the Tyrosine-protein phosphatase domain; that stretch reads LAKEWQALCA…EFALTAVAEE (261 aa). Lys-754 participates in a covalent cross-link: Glycyl lysine isopeptide (Lys-Gly) (interchain with G-Cter in SUMO).

This sequence belongs to the protein-tyrosine phosphatase family. Receptor class 8 subfamily. As to quaternary structure, homodimer; shown for the unprocessed protein (proICA512) in the endoplasmic reticulum and resolved during protein maturation as ICA512-TMF seems to be predominantly monomeric in secretory granules; however, ICA512-CCF interacts with ICA512-TMF disrupting the ICA512-TMF:SNTB2 complex. The isolated lumenal RESP18 homology domain has been shown to form disulfide-linked homooligomers. Interacts (via cytoplasmic domain) with phosphorylated SNTB2; this protects PTPRN against cleavage by CAPN1 to produce ICA512-CCF. Dephosphorylation of SNTB2 upon insulin stimulation disrupts the interaction and results in PTPRN cleavage. Interacts with SNX19. ICA512-CCF interacts with PIAS4; in the nucleus. Interacts with STAT5B (phosphorylated); down-regulated by ICA512-CCF sumoylation; ICA512-CCF prevents STAT5B dephosphorylation; ICA512-CCF mediates interaction of STAT5B with PIAS4. Interacts (via RESP18 homology domain) with insulin and proinsulin. Interacts with PTPRN2, PTPRA and PTPRE. Post-translationally, N-glycosylated. O-glycosylated. In terms of processing, subject to proteolytic cleavage at multiple sites. Subject to cleavage on a pair of basic residues. On exocytosis of secretory granules in pancreatic beta-cells ICA512-TMF is transiently inserted in the plasma-membrane and cleaved by mu-type calpain CPN1 to yield ICA512-CCF. Post-translationally, sumoylated at two sites including Lys-754. Sumoylation decreases interaction with STAT5. Detected in pituitary (at protein level).

The protein resides in the membrane. Its subcellular location is the cytoplasmic vesicle. It is found in the secretory vesicle membrane. The protein localises to the perikaryon. It localises to the cell projection. The protein resides in the axon. Its subcellular location is the synapse. It is found in the cell membrane. The protein localises to the endosome. It localises to the nucleus. Its function is as follows. Plays a role in vesicle-mediated secretory processes. Required for normal accumulation of secretory vesicles in hippocampus, pituitary and pancreatic islets. Required for the accumulation of normal levels of insulin-containing vesicles and preventing their degradation. Plays a role in insulin secretion in response to glucose stimuli. Required for normal accumulation of the neurotransmitters norepinephrine, dopamine and serotonin in the brain. In females, but not in males, required for normal accumulation and secretion of pituitary hormones, such as luteinizing hormone (LH) and follicle-stimulating hormone (FSH). Required to maintain normal levels of renin expression and renin release. Seems to lack intrinsic enzyme activity. May regulate catalytic active protein-tyrosine phosphatases such as PTPRA through dimerization. In terms of biological role, ICA512-TMF regulates dynamics and exocytosis of insulin secretory granules (SGs); binding of ICA512-TMF to SNTB2/beta-2-syntrophin is proposed to restrain SGs mobility and exocytosis by tethering them to the actin cytoskeleton depending on UTRN; the function is inhibited by cytoplasmic ICA512-CFF dimerizing with ICA512-TMF and displacing SNTB2. ICA512-CCF translocated to the nucleus promotes expression of insulin and other granule-related genes; the function implicates binding to and regulating activity of STAT5B probably by preventing its dephosphorylation and potentially by inducing its sumoylation by recruiting PIAS4. Enhances pancreatic beta-cell proliferation by converging with signaling by STAT5B and STAT3. ICA512-CCF located in the cytoplasm regulates dynamics and exocytosis of insulin secretory granules (SGs) by dimerizing with ICA512-TMF and displacing SNTB2 thus enhancing SGs mobility and exocytosis. The chain is Receptor-type tyrosine-protein phosphatase-like N (PTPRN) from Bos taurus (Bovine).